The following is a 257-amino-acid chain: Acetylglutamate kinase (257 aa).

Substrate contacts are provided by residues Gly-43–Gly-44, Arg-65, and Asn-157. Residues Asp-180–Leu-185 and Ile-208–Thr-210 contribute to the ATP site.

The protein belongs to the acetylglutamate kinase family. ArgB subfamily. As to quaternary structure, homodimer.

It is found in the cytoplasm. It carries out the reaction N-acetyl-L-glutamate + ATP = N-acetyl-L-glutamyl 5-phosphate + ADP. The protein operates within amino-acid biosynthesis; L-arginine biosynthesis; N(2)-acetyl-L-ornithine from L-glutamate: step 2/4. Catalyzes the ATP-dependent phosphorylation of N-acetyl-L-glutamate. The protein is Acetylglutamate kinase of Escherichia coli O139:H28 (strain E24377A / ETEC).